Consider the following 430-residue polypeptide: Glutamate-1-semialdehyde 2,1-aminomutase (430 aa).

An N6-(pyridoxal phosphate)lysine modification is found at Lys269.

Belongs to the class-III pyridoxal-phosphate-dependent aminotransferase family. HemL subfamily. In terms of assembly, homodimer. Pyridoxal 5'-phosphate is required as a cofactor.

Its subcellular location is the cytoplasm. The catalysed reaction is (S)-4-amino-5-oxopentanoate = 5-aminolevulinate. It functions in the pathway porphyrin-containing compound metabolism; protoporphyrin-IX biosynthesis; 5-aminolevulinate from L-glutamyl-tRNA(Glu): step 2/2. The sequence is that of Glutamate-1-semialdehyde 2,1-aminomutase from Desulfitobacterium hafniense (strain DSM 10664 / DCB-2).